The chain runs to 621 residues: Chaperone protein HscA homolog (621 aa).

Belongs to the heat shock protein 70 family.

Functionally, chaperone involved in the maturation of iron-sulfur cluster-containing proteins. Has a low intrinsic ATPase activity which is markedly stimulated by HscB. This Azotobacter vinelandii (strain DJ / ATCC BAA-1303) protein is Chaperone protein HscA homolog.